The primary structure comprises 311 residues: Glutaminase (311 aa).

Substrate contacts are provided by S66, N116, E162, N169, Y193, Y245, and V263.

This sequence belongs to the glutaminase family. In terms of assembly, homotetramer.

It carries out the reaction L-glutamine + H2O = L-glutamate + NH4(+). This is Glutaminase from Rhodopseudomonas palustris (strain ATCC BAA-98 / CGA009).